The chain runs to 246 residues: MKLIIGVITLFPQMFDALKSGVIGRALKQDRLTLSFWNPRDYATDPHRTVDDRPYGGGPGMVMKFEPLALALKAAKAQLGENTKVIHLTPQGKLLTQAIVREKIHASPLILLAGRYEGIDERLIEAEVDEEWSIGDYILSGGELPAMVLIDAMTRLLPGVLGHKDSASQDSFTAGLLDYPHYTRPEKIADRPVPSVLLSGDHEAISRWRLKQSLGRTWQRRQDLIKRRSLSENEQRLLDEFFEESS.

Residues Gly114 and 134–139 (IGDYIL) contribute to the S-adenosyl-L-methionine site.

Belongs to the RNA methyltransferase TrmD family. Homodimer.

The protein resides in the cytoplasm. It catalyses the reaction guanosine(37) in tRNA + S-adenosyl-L-methionine = N(1)-methylguanosine(37) in tRNA + S-adenosyl-L-homocysteine + H(+). Its function is as follows. Specifically methylates guanosine-37 in various tRNAs. This Coxiella burnetii (strain CbuK_Q154) (Coxiella burnetii (strain Q154)) protein is tRNA (guanine-N(1)-)-methyltransferase.